The following is a 124-amino-acid chain: Large ribosomal subunit protein uL22 (124 aa).

Belongs to the universal ribosomal protein uL22 family. In terms of assembly, part of the 50S ribosomal subunit.

In terms of biological role, this protein binds specifically to 23S rRNA; its binding is stimulated by other ribosomal proteins, e.g. L4, L17, and L20. It is important during the early stages of 50S assembly. It makes multiple contacts with different domains of the 23S rRNA in the assembled 50S subunit and ribosome. The globular domain of the protein is located near the polypeptide exit tunnel on the outside of the subunit, while an extended beta-hairpin is found that lines the wall of the exit tunnel in the center of the 70S ribosome. This Synechococcus sp. (strain JA-2-3B'a(2-13)) (Cyanobacteria bacterium Yellowstone B-Prime) protein is Large ribosomal subunit protein uL22.